The sequence spans 189 residues: Interferon alpha-B (189 aa).

Residues 1-23 (MAPAWSFLLALLLLSCNAICSLG) form the signal peptide. Disulfide bonds link Cys-24/Cys-122 and Cys-52/Cys-162.

This sequence belongs to the alpha/beta interferon family.

The protein localises to the secreted. In terms of biological role, produced by macrophages, IFN-alpha have antiviral activities. Interferon stimulates the production of two enzymes: a protein kinase and an oligoadenylate synthetase. The protein is Interferon alpha-B (IFNAB) of Bos taurus (Bovine).